We begin with the raw amino-acid sequence, 153 residues long: Alpha-amylase inhibitor 0.28 (153 aa).

A signal peptide spans 1–30 (MWMKTVFWGLLVFMLVATTMAVEYGARSHN). Intrachain disulfides connect Cys37-Cys84, Cys51-Cys72, Cys59-Cys112, Cys73-Cys128, and Cys86-Cys143.

The protein belongs to the protease inhibitor I6 (cereal trypsin/alpha-amylase inhibitor) family. As to quaternary structure, monomer. Post-translationally, the disulfide bonds are essential for the inhibitor activity. In terms of tissue distribution, endosperm.

The protein resides in the secreted. In terms of biological role, alpha-amylase inhibitor. The sequence is that of Alpha-amylase inhibitor 0.28 (IMA1) from Triticum aestivum (Wheat).